The primary structure comprises 250 residues: MEAVRPDSCERGTAAARAEERPAPEARAHFRVTRFIMEAGVKLGMQSIPIATACTIYHKFFCEINLDAYDLYLVAMSSLYLAGKVEEQHLRTRDIINVSHRYFNPGSEPLELDSRFWELRDSIVQCELLMLRVLRFQVSFQHPHKYLLHYLISLKNWLNRYSWQRTPISVTAWALLRDSYHGGLCLRFQAQHLAVAVLYLALQVYGVEVPAEGEAEKPWWQVFSDDLTKPIIDNIVSDLIQIYTMDTEIP.

Met1 carries the N-acetylmethionine modification. The segment covering Met1–Glu10 has biased composition (basic and acidic residues). The segment at Met1–Pro22 is disordered.

The protein belongs to the cyclin family. Cyclin-like FAM58 subfamily. In terms of assembly, associates with CDK10 to promote its kinase activity.

In terms of biological role, activating cyclin for the cyclin-associated kinase CDK10. This Rattus norvegicus (Rat) protein is Cyclin-Q (Ccnq).